The primary structure comprises 190 residues: Ion-translocating oxidoreductase complex subunit B (190 aa).

Residues 1–26 (MLTFWLAVATLSALALVAGAVLGFAA) are hydrophobic. A 4Fe-4S domain is found at 32–90 (KTDPVAERIDALLPQSQCAQCGYPGCRPYAEAVAGGAPINKCVPGGEAVMLKIAAQLSV). Residues Cys49, Cys52, Cys57, Cys73, Cys115, Cys118, Cys121, Cys125, Cys145, Cys148, Cys151, and Cys155 each contribute to the [4Fe-4S] cluster site. 4Fe-4S ferredoxin-type domains lie at 106 to 135 (RVAW…GATR) and 136 to 165 (AVHT…MRPL).

This sequence belongs to the 4Fe4S bacterial-type ferredoxin family. RnfB subfamily. The complex is composed of six subunits: RnfA, RnfB, RnfC, RnfD, RnfE and RnfG. [4Fe-4S] cluster is required as a cofactor.

The protein localises to the cell inner membrane. Its function is as follows. Part of a membrane-bound complex that couples electron transfer with translocation of ions across the membrane. This chain is Ion-translocating oxidoreductase complex subunit B, found in Sodalis glossinidius (strain morsitans).